The sequence spans 146 residues: MIAAVIPIFVISLSNISHIILAIFFFPSIVEFLDDLYWGFTYRSWSPIARQLELGPNIYIHHSKVSILMDKADLYEKNQSRKDILNYYREEDKDFEQYLNFRENRKMLQQAFESGTLIRKQNYRARIHERMVEQPVTEKKELLRSR.

A helical membrane pass occupies residues 6–26; the sequence is IPIFVISLSNISHIILAIFFF.

It localises to the membrane. This is an uncharacterized protein from Caenorhabditis elegans.